We begin with the raw amino-acid sequence, 336 residues long: MKTIFSGIQPSGTPTIGNYIGAMKQFIELQNEYNCYFCIVDEHAITVPQEPQKLRQQIRSLAALYLAVGLDPQKATIFIQSEVSAHAEAGWIIQCNTSIGELERMTQFKDKSQKNGRAGVSAGLLTYPPLMVGDIVLYNADLVPVGDDQKQHLELTRDFVERFNKRYAQKNQEILTIPEVKIAEQGSRIMSLQEPTKKMSKSDTNVKGFISMLDEPAVIRKKIRSAVTDSTGVIEYNKEEKPGITNLLNIYSAATGQTVEELVQAYEGKGYGDFKADLAEAVVALLEPIQVRYQELLASEELDMILDEGAENARLVANKTLQRMKNAVGLGRKVRR.

ATP contacts are provided by residues 9 to 11 (QPS) and 17 to 18 (GN). The 'HIGH' region motif lies at 10–18 (PSGTPTIGN). Residue Asp134 participates in L-tryptophan binding. Residues 146–148 (GDD), Ile189, and 198–202 (KMSKS) contribute to the ATP site. The 'KMSKS' region signature appears at 198 to 202 (KMSKS).

This sequence belongs to the class-I aminoacyl-tRNA synthetase family. In terms of assembly, homodimer.

It is found in the cytoplasm. The enzyme catalyses tRNA(Trp) + L-tryptophan + ATP = L-tryptophyl-tRNA(Trp) + AMP + diphosphate + H(+). In terms of biological role, catalyzes the attachment of tryptophan to tRNA(Trp). This chain is Tryptophan--tRNA ligase, found in Enterococcus faecalis (strain ATCC 700802 / V583).